A 186-amino-acid polypeptide reads, in one-letter code: UPF0301 protein Daro_3893 (186 aa).

It belongs to the UPF0301 (AlgH) family.

In Dechloromonas aromatica (strain RCB), this protein is UPF0301 protein Daro_3893.